Consider the following 601-residue polypeptide: Bifunctional protein GlmU (601 aa).

The segment at 1 to 375 (MKSDLAIVIL…SELLLGVNNR (375 aa)) is pyrophosphorylase. UDP-N-acetyl-alpha-D-glucosamine-binding positions include 10 to 13 (LAAG), Lys24, Gln75, and 81 to 82 (GT). Asp165 is a binding site for Mg(2+). 4 residues coordinate UDP-N-acetyl-alpha-D-glucosamine: Gly201, Glu216, Asn230, and Asn373. Asn373 serves as a coordination point for Mg(2+). The segment at 376-396 (VQLAKTEKILNDQIIKRWQLY) is linker. The interval 397–601 (GVTIKSPETT…PKWAENRGDG (205 aa)) is N-acetyltransferase. Residues Arg478 and Lys496 each coordinate UDP-N-acetyl-alpha-D-glucosamine. The Proton acceptor role is filled by His508. UDP-N-acetyl-alpha-D-glucosamine is bound by residues Tyr511 and Asn522. Acetyl-CoA contacts are provided by residues Ala525, 531-532 (NY), and Ala568.

In the N-terminal section; belongs to the N-acetylglucosamine-1-phosphate uridyltransferase family. It in the C-terminal section; belongs to the transferase hexapeptide repeat family. Homotrimer. Mg(2+) serves as cofactor.

It is found in the cytoplasm. It catalyses the reaction alpha-D-glucosamine 1-phosphate + acetyl-CoA = N-acetyl-alpha-D-glucosamine 1-phosphate + CoA + H(+). The catalysed reaction is N-acetyl-alpha-D-glucosamine 1-phosphate + UTP + H(+) = UDP-N-acetyl-alpha-D-glucosamine + diphosphate. The protein operates within nucleotide-sugar biosynthesis; UDP-N-acetyl-alpha-D-glucosamine biosynthesis; N-acetyl-alpha-D-glucosamine 1-phosphate from alpha-D-glucosamine 6-phosphate (route II): step 2/2. Its pathway is nucleotide-sugar biosynthesis; UDP-N-acetyl-alpha-D-glucosamine biosynthesis; UDP-N-acetyl-alpha-D-glucosamine from N-acetyl-alpha-D-glucosamine 1-phosphate: step 1/1. It functions in the pathway bacterial outer membrane biogenesis; LPS lipid A biosynthesis. Functionally, catalyzes the last two sequential reactions in the de novo biosynthetic pathway for UDP-N-acetylglucosamine (UDP-GlcNAc). The C-terminal domain catalyzes the transfer of acetyl group from acetyl coenzyme A to glucosamine-1-phosphate (GlcN-1-P) to produce N-acetylglucosamine-1-phosphate (GlcNAc-1-P), which is converted into UDP-GlcNAc by the transfer of uridine 5-monophosphate (from uridine 5-triphosphate), a reaction catalyzed by the N-terminal domain. In Tropheryma whipplei (strain TW08/27) (Whipple's bacillus), this protein is Bifunctional protein GlmU.